Consider the following 439-residue polypeptide: GTPase Der (439 aa).

EngA-type G domains follow at residues 2–168 and 181–357; these read ATVL…EEKG and IKVA…ASYT. GTP-binding positions include 8 to 15, 55 to 59, 118 to 121, 187 to 194, 234 to 238, and 300 to 303; these read GKPNVGKS, DTCGV, NKAE, GRPNVGKS, DTAGL, and NKWD. Residues 358–439 enclose the KH-like domain; sequence TKVPSSAINS…PIFLKFKRSR (82 aa).

It belongs to the TRAFAC class TrmE-Era-EngA-EngB-Septin-like GTPase superfamily. EngA (Der) GTPase family. As to quaternary structure, associates with the 50S ribosomal subunit.

In terms of biological role, GTPase that plays an essential role in the late steps of ribosome biogenesis. The protein is GTPase Der of Thermotoga sp. (strain RQ2).